A 520-amino-acid chain; its full sequence is Autophagy-related protein 22 (520 aa).

N-linked (GlcNAc...) asparagine glycosylation occurs at asparagine 11. 4 helical membrane passes run 32–52, 104–124, 133–153, and 158–178; these read IVGW…AIAT, FSVS…VVDI, NVLL…SRIY, and YMLA…NVVG. The N-linked (GlcNAc...) asparagine glycan is linked to asparagine 193. Helical transmembrane passes span 214–234 and 244–264; these read GASI…FLIK and VATL…SWLL. N-linked (GlcNAc...) asparagine glycosylation occurs at asparagine 280. A run of 6 helical transmembrane segments spans residues 316 to 336, 350 to 370, 386 to 406, 415 to 435, 454 to 474, and 483 to 503; these read VVIF…INST, LSLI…AFTI, LIYI…GFVF, FEMF…SAVS, IFNV…GLIT, and SFFL…LLDV.

The protein belongs to the ATG22 family.

It localises to the vacuole membrane. In terms of biological role, vacuolar effluxer which mediate the efflux of amino acids resulting from autophagic degradation. The release of autophagic amino acids allows the maintenance of protein synthesis and viability during nitrogen starvation. This chain is Autophagy-related protein 22 (ATG22), found in Vanderwaltozyma polyspora (strain ATCC 22028 / DSM 70294 / BCRC 21397 / CBS 2163 / NBRC 10782 / NRRL Y-8283 / UCD 57-17) (Kluyveromyces polysporus).